The primary structure comprises 273 residues: Cell division protein ZipA (273 aa).

M1 is a topological domain (periplasmic). Residues 2–22 traverse the membrane as a helical segment; that stretch reads EFGLREWLIVIGIIVIAGILF. Over 23–273 the chain is Cytoplasmic; sequence DGWRRMRGGK…FERRQLTQKR (251 aa). Residues 65–125 form a disordered region; that stretch reads EMEPQLDEDD…QEPKKSAKLS (61 aa). Over residues 111–120 the composition is skewed to basic and acidic residues; the sequence is VDDKPQEPKK.

The protein belongs to the ZipA family. In terms of assembly, interacts with FtsZ via their C-terminal domains.

It is found in the cell inner membrane. Its function is as follows. Essential cell division protein that stabilizes the FtsZ protofilaments by cross-linking them and that serves as a cytoplasmic membrane anchor for the Z ring. Also required for the recruitment to the septal ring of downstream cell division proteins. This is Cell division protein ZipA from Ectopseudomonas mendocina (strain ymp) (Pseudomonas mendocina).